The sequence spans 233 residues: Beta-fibrinogenase brevinase (233 aa).

Positions 1–224 (VIGGDECNIN…YIDWIQSIIA (224 aa)) constitute a Peptidase S1 domain. Intrachain disulfides connect Cys-7-Cys-138, Cys-25-Cys-41, Cys-73-Cys-231, Cys-117-Cys-185, Cys-149-Cys-164, and Cys-175-Cys-200. His-40 (charge relay system) is an active-site residue. N-linked (GlcNAc...) asparagine glycosylation is present at Asn-54. Residue Asp-85 is the Charge relay system of the active site. The N-linked (GlcNAc...) asparagine glycan is linked to Asn-129. Positions 176–178 (RGD) match the Cell attachment site motif. Residue Ser-179 is the Charge relay system of the active site. A glycan (N-linked (GlcNAc...) asparagine) is linked at Asn-226.

This sequence belongs to the peptidase S1 family. Snake venom subfamily. In terms of assembly, heterodimer of the brevinase A chain and the brevinase B chain. As to expression, expressed by the venom gland.

The protein localises to the secreted. The fibrinolytic activity is completely inhibited by PMSF, diisopropylfluorophosphate (DFP), pefabloc, dithiothreitol (DTT) and Zn(2+), but not by Pepstatin A, E64, iodoacetate, chymostatin, tosyl-Lphenylalanine chloromethyl ketone (TPCK), soybean trypsin inhibitor (SBTI), phosphoramidon, Ca(2+), Co(2+), Cu(2+), Fe(2+), Mg(2+), Mn(2+), K(+), and Na(+). Snake venom serine protease that has fibrinogenolytic activities. Preferentially cleaves the Bbeta-chain (FGB) and more slowly the Aa-chain (FGA) of fibrinogen, but does not affect the gamma-chain. Also has fibrinolytic activity. May play a role in antithrombotic reaction as well as thrombolytic reaction. This is Beta-fibrinogenase brevinase from Gloydius blomhoffii (Mamushi).